Reading from the N-terminus, the 327-residue chain is 4-hydroxy-2-oxoglutarate aldolase, mitochondrial (327 aa).

Residues 1–25 (MLGPQVWSSVRQGLSRSLSRNVGVW) constitute a mitochondrion transit peptide. 77-78 (SN) is a binding site for substrate. Lys-196 functions as the Schiff-base intermediate with substrate in the catalytic mechanism. Ser-198 and Gly-222 together coordinate substrate.

It belongs to the DapA family. In terms of assembly, homotetramer.

The protein localises to the mitochondrion. The catalysed reaction is (4S)-4-hydroxy-2-oxoglutarate = glyoxylate + pyruvate. It carries out the reaction (4R)-4-hydroxy-2-oxoglutarate = glyoxylate + pyruvate. With respect to regulation, inhibited by divalent cations. Its function is as follows. Catalyzes the final step in the metabolic pathway of hydroxyproline. The polypeptide is 4-hydroxy-2-oxoglutarate aldolase, mitochondrial (HOGA1) (Homo sapiens (Human)).